The following is a 517-amino-acid chain: Crotonobetaine/carnitine--CoA ligase (517 aa).

This sequence belongs to the ATP-dependent AMP-binding enzyme family.

It catalyses the reaction 4-(trimethylamino)butanoate + ATP + CoA = 4-(trimethylamino)butanoyl-CoA + AMP + diphosphate. The enzyme catalyses crotonobetaine + ATP + CoA = crotonobetainyl-CoA + AMP + diphosphate. The catalysed reaction is (R)-carnitine + ATP + CoA = (R)-carnitinyl-CoA + AMP + diphosphate. Its pathway is amine and polyamine metabolism; carnitine metabolism. Functionally, catalyzes the transfer of CoA to carnitine, generating the initial carnitinyl-CoA needed for the CaiB reaction cycle. Also has activity toward crotonobetaine and gamma-butyrobetaine. In Salmonella enteritidis PT4 (strain P125109), this protein is Crotonobetaine/carnitine--CoA ligase.